Reading from the N-terminus, the 691-residue chain is Methionine--tRNA ligase (691 aa).

The short motif at 15 to 25 (PYTNGPIHIGH) is the 'HIGH' region element. C147, C150, C160, and C163 together coordinate Zn(2+). The 'KMSKS' region signature appears at 336-340 (KLSTS). T339 is an ATP binding site. Residues 589–691 (DFTKMDLRVG…DGVKAGTTIN (103 aa)) form the tRNA-binding domain.

It belongs to the class-I aminoacyl-tRNA synthetase family. MetG type 1 subfamily. Homodimer. Zn(2+) serves as cofactor.

Its subcellular location is the cytoplasm. The enzyme catalyses tRNA(Met) + L-methionine + ATP = L-methionyl-tRNA(Met) + AMP + diphosphate. Its function is as follows. Is required not only for elongation of protein synthesis but also for the initiation of all mRNA translation through initiator tRNA(fMet) aminoacylation. The chain is Methionine--tRNA ligase from Christiangramia forsetii (strain DSM 17595 / CGMCC 1.15422 / KT0803) (Gramella forsetii).